The primary structure comprises 92 residues: N(2)-fixation sustaining protein CowN (92 aa).

This sequence belongs to the CowN family.

Its function is as follows. Is required to sustain N(2)-dependent growth in the presence of low levels of carbon monoxide (CO). Probably acts by protecting the N(2) fixation ability of the nitrogenase complex, which is inactivated in the presence of CO. This is N(2)-fixation sustaining protein CowN from Cereibacter sphaeroides (strain KD131 / KCTC 12085) (Rhodobacter sphaeroides).